The following is a 161-amino-acid chain: Allophycocyanin alpha chain 1 (161 aa).

Position 71 is an N4-methylasparagine (N71). Residue C81 coordinates (2R,3E)-phycocyanobilin.

This sequence belongs to the phycobiliprotein family. As to quaternary structure, component of the phycobilisome. Heterodimer of an alpha and a beta chain. In terms of processing, contains one covalently linked bilin chromophore.

It localises to the cellular thylakoid membrane. In terms of biological role, light-harvesting photosynthetic bile pigment-protein from the phycobiliprotein complex. Allophycocyanin has a maximum absorption at approximately 650 nanometers. The polypeptide is Allophycocyanin alpha chain 1 (Microchaete diplosiphon (Fremyella diplosiphon)).